The primary structure comprises 74 residues: Toxin BmKaTx17 (74 aa).

Residues 1 to 8 (LLMTGVES) form the signal peptide. Positions 10–72 (RDAYIAKNYN…KPIRIPGKCH (63 aa)) constitute an LCN-type CS-alpha/beta domain. Intrachain disulfides connect C20–C71, C24–C44, C30–C54, and C34–C56. Residues 73 to 74 (RR) constitute a propeptide, removed by a carboxypeptidase.

It belongs to the long (4 C-C) scorpion toxin superfamily. Sodium channel inhibitor family. Alpha subfamily. In terms of tissue distribution, expressed by the venom gland.

It is found in the secreted. Functionally, alpha toxins bind voltage-independently at site-3 of sodium channels (Nav) and inhibit the inactivation of the activated channels, thereby blocking neuronal transmission. This Olivierus martensii (Manchurian scorpion) protein is Toxin BmKaTx17.